We begin with the raw amino-acid sequence, 356 residues long: Probable farnesyl diphosphate synthase DDB_G0278823 (356 aa).

Isopentenyl diphosphate contacts are provided by Lys-55, Arg-58, and Gln-94. Residues Asp-101 and Asp-105 each contribute to the Mg(2+) site. Dimethylallyl diphosphate is bound at residue Arg-110. Arg-111 serves as a coordination point for isopentenyl diphosphate. Residues Lys-203, Thr-204, Gln-243, Lys-260, and Lys-269 each coordinate dimethylallyl diphosphate.

It belongs to the FPP/GGPP synthase family. Requires Mg(2+) as cofactor.

The protein resides in the cytoplasm. The enzyme catalyses isopentenyl diphosphate + dimethylallyl diphosphate = (2E)-geranyl diphosphate + diphosphate. It catalyses the reaction isopentenyl diphosphate + (2E)-geranyl diphosphate = (2E,6E)-farnesyl diphosphate + diphosphate. Its pathway is isoprenoid biosynthesis; farnesyl diphosphate biosynthesis; farnesyl diphosphate from geranyl diphosphate and isopentenyl diphosphate: step 1/1. The protein operates within isoprenoid biosynthesis; geranyl diphosphate biosynthesis; geranyl diphosphate from dimethylallyl diphosphate and isopentenyl diphosphate: step 1/1. With respect to regulation, inhibited by aminobisphosphonate drugs (aBP), such as risedronate and alendronate. In terms of biological role, key enzyme in isoprenoid biosynthesis which catalyzes the formation of farnesyl diphosphate (FPP), a sterol precursor. The chain is Probable farnesyl diphosphate synthase DDB_G0278823 from Dictyostelium discoideum (Social amoeba).